We begin with the raw amino-acid sequence, 298 residues long: Glycine--tRNA ligase alpha subunit (298 aa).

The protein belongs to the class-II aminoacyl-tRNA synthetase family. In terms of assembly, tetramer of two alpha and two beta subunits.

The protein localises to the cytoplasm. It catalyses the reaction tRNA(Gly) + glycine + ATP = glycyl-tRNA(Gly) + AMP + diphosphate. The polypeptide is Glycine--tRNA ligase alpha subunit (Helicobacter pylori (strain Shi470)).